The primary structure comprises 217 residues: MIANNDQYKEYMKGTTTVGIVCNDGIVLATDKRATMGNLIADKEAKKLYKIDDYMAMTIAGSVGDAQSLVRIISAEANLYKLRTGNNIPPHSCAMLLSNVLHGSRHFPFLIQLIIGGYDTIHGAKLFSLDAVGGLNEETSFTATGSGSPTAFGVLEEEYKKDMTINKGKLLAIKSLTAAMKRDAFSGNGISLAVIDKNGVKIYSDEEIEELSNILYK.

The propeptide at methionine 1–glycine 14 is removed in mature form; by autocatalysis. Residue threonine 15 is the Nucleophile of the active site.

The protein belongs to the peptidase T1B family. As to quaternary structure, the 20S proteasome core is composed of 14 alpha and 14 beta subunits that assemble into four stacked heptameric rings, resulting in a barrel-shaped structure. The two inner rings, each composed of seven catalytic beta subunits, are sandwiched by two outer rings, each composed of seven alpha subunits. The catalytic chamber with the active sites is on the inside of the barrel. Has a gated structure, the ends of the cylinder being occluded by the N-termini of the alpha-subunits. Is capped at one or both ends by the proteasome regulatory ATPase, PAN.

The protein localises to the cytoplasm. It carries out the reaction Cleavage of peptide bonds with very broad specificity.. The formation of the proteasomal ATPase PAN-20S proteasome complex, via the docking of the C-termini of PAN into the intersubunit pockets in the alpha-rings, triggers opening of the gate for substrate entry. Interconversion between the open-gate and close-gate conformations leads to a dynamic regulation of the 20S proteasome proteolysis activity. In terms of biological role, component of the proteasome core, a large protease complex with broad specificity involved in protein degradation. The sequence is that of Proteasome subunit beta from Methanococcus aeolicus (strain ATCC BAA-1280 / DSM 17508 / OCM 812 / Nankai-3).